Here is a 102-residue protein sequence, read N- to C-terminus: Cuticle protein 10.9 (102 aa).

At glutamine 1 the chain carries Pyrrolidone carboxylic acid. The tract at residues 1-45 is disordered; the sequence is QLAEQYPPHPYSFSYDATDETGARISTSESGDESNSKTGSYSYQT. The 67-residue stretch at 8–74 folds into the Chitin-binding type R&amp;R domain; sequence PHPYSFSYDA…SIDTNEPGTK (67 aa). Over residues 36–45 the composition is skewed to polar residues; it reads SKTGSYSYQT.

Component of the cuticle of the tick. Binds chitin. The polypeptide is Cuticle protein 10.9 (Ixodes ricinus (Common tick)).